The primary structure comprises 144 residues: Lysozyme C II (144 aa).

The first 15 residues, 1–15 (MRAVVVLLLVAVASA), serve as a signal peptide directing secretion. One can recognise a C-type lysozyme domain in the interval 16 to 144 (KVYDRCELAR…LRSYVAGCGV (129 aa)). Intrachain disulfides connect Cys-21-Cys-142, Cys-45-Cys-130, Cys-79-Cys-95, and Cys-91-Cys-109. Catalysis depends on residues Glu-50 and Asp-67.

The protein localises to the secreted. The catalysed reaction is Hydrolysis of (1-&gt;4)-beta-linkages between N-acetylmuramic acid and N-acetyl-D-glucosamine residues in a peptidoglycan and between N-acetyl-D-glucosamine residues in chitodextrins.. In terms of biological role, lysozymes have primarily a bacteriolytic function; those in tissues and body fluids are associated with the monocyte-macrophage system and enhance the activity of immunoagents. Has antibacterial activity against the Gram positive bacterium P.citreus. Has no antibacterial activity against the Gram negative bacteria E.coli and Y.ruckeri. Does not have hemolytic activity against trout erythrocytes. This is Lysozyme C II from Oncorhynchus mykiss (Rainbow trout).